The sequence spans 657 residues: 1-deoxy-D-xylulose-5-phosphate synthase (657 aa).

His73 is a binding site for thiamine diphosphate. The segment at 91-110 (RQEGGMSGYPDRGESEHDIV) is disordered. Positions 101–110 (DRGESEHDIV) are enriched in basic and acidic residues. 113 to 115 (SHA) serves as a coordination point for thiamine diphosphate. Mg(2+) is bound at residue Asp145. Residues 146-147 (GA), Asn175, Tyr293, and Glu375 contribute to the thiamine diphosphate site. Asn175 serves as a coordination point for Mg(2+).

The protein belongs to the transketolase family. DXPS subfamily. As to quaternary structure, homodimer. The cofactor is Mg(2+). It depends on thiamine diphosphate as a cofactor.

The enzyme catalyses D-glyceraldehyde 3-phosphate + pyruvate + H(+) = 1-deoxy-D-xylulose 5-phosphate + CO2. Its pathway is metabolic intermediate biosynthesis; 1-deoxy-D-xylulose 5-phosphate biosynthesis; 1-deoxy-D-xylulose 5-phosphate from D-glyceraldehyde 3-phosphate and pyruvate: step 1/1. Catalyzes the acyloin condensation reaction between C atoms 2 and 3 of pyruvate and glyceraldehyde 3-phosphate to yield 1-deoxy-D-xylulose-5-phosphate (DXP). This Arthrobacter sp. (strain FB24) protein is 1-deoxy-D-xylulose-5-phosphate synthase.